Here is a 506-residue protein sequence, read N- to C-terminus: Alpha-1,3/1,6-mannosyltransferase alg2 (506 aa).

The next 2 helical transmembrane spans lie at 82-104 and 118-138; these read SIFG…MILL and LSTC…YCHF. N299 is a glycosylation site (N-linked (GlcNAc...) asparagine). Helical transmembrane passes span 443 to 463 and 481 to 501; these read LLAV…AATV and LGFM…TVYA.

Belongs to the glycosyltransferase group 1 family. Glycosyltransferase 4 subfamily.

It localises to the endoplasmic reticulum membrane. The catalysed reaction is a beta-D-Man-(1-&gt;4)-beta-D-GlcNAc-(1-&gt;4)-alpha-D-GlcNAc-diphospho-di-trans,poly-cis-dolichol + GDP-alpha-D-mannose = an alpha-D-Man-(1-&gt;3)-beta-D-Man-(1-&gt;4)-beta-D-GlcNAc-(1-&gt;4)-alpha-D-GlcNAc-diphospho-di-trans,poly-cis-dolichol + GDP + H(+). The enzyme catalyses an alpha-D-Man-(1-&gt;3)-beta-D-Man-(1-&gt;4)-beta-D-GlcNAc-(1-&gt;4)-alpha-D-GlcNAc-diphospho-di-trans,poly-cis-dolichol + GDP-alpha-D-mannose = an alpha-D-Man-(1-&gt;3)-[alpha-D-Man-(1-&gt;6)]-beta-D-Man-(1-&gt;4)-beta-D-GlcNAc-(1-&gt;4)-alpha-D-GlcNAc-diphospho-di-trans,poly-cis-dolichol + GDP + H(+). It participates in protein modification; protein glycosylation. Mannosylates Man(2)GlcNAc(2)-dolichol diphosphate and Man(1)GlcNAc(2)-dolichol diphosphate to form Man(3)GlcNAc(2)-dolichol diphosphate. The protein is Alpha-1,3/1,6-mannosyltransferase alg2 (alg2) of Schizosaccharomyces pombe (strain 972 / ATCC 24843) (Fission yeast).